The chain runs to 82 residues: MNEKTHNLQDTFLNHVRKNKTTLTIFLVNGVKLQGVVTWFDNFCVLLRRDGHSQLVYKHAISTIMPAQPVQLFEPEANGEEG.

The Sm domain occupies 10–70; it reads DTFLNHVRKN…ISTIMPAQPV (61 aa).

This sequence belongs to the Hfq family. Homohexamer.

Its function is as follows. RNA chaperone that binds small regulatory RNA (sRNAs) and mRNAs to facilitate mRNA translational regulation in response to envelope stress, environmental stress and changes in metabolite concentrations. Also binds with high specificity to tRNAs. The polypeptide is RNA-binding protein Hfq (Parvibaculum lavamentivorans (strain DS-1 / DSM 13023 / NCIMB 13966)).